The chain runs to 444 residues: Chromosomal replication initiator protein DnaA (444 aa).

Positions 1–73 (MDSSAQQLWH…AEVVQDIVGY (73 aa)) are domain I, interacts with DnaA modulators. Residues 73–104 (YPVEIQLTAQQGDLIAIFQPHTSLESELSPTN) form a domain II region. The tract at residues 105 to 321 (QLNPKYNFSR…GALIRATTYI (217 aa)) is domain III, AAA+ region. Gly-149, Gly-151, Lys-152, and Thr-153 together coordinate ATP. The interval 322–444 (SISGLPMTVE…ERINSLSRNQ (123 aa)) is domain IV, binds dsDNA.

Belongs to the DnaA family. In terms of assembly, oligomerizes as a right-handed, spiral filament on DNA at oriC.

It is found in the cytoplasm. In terms of biological role, plays an essential role in the initiation and regulation of chromosomal replication. ATP-DnaA binds to the origin of replication (oriC) to initiate formation of the DNA replication initiation complex once per cell cycle. Binds the DnaA box (a 9 base pair repeat at the origin) and separates the double-stranded (ds)DNA. Forms a right-handed helical filament on oriC DNA; dsDNA binds to the exterior of the filament while single-stranded (ss)DNA is stabiized in the filament's interior. The ATP-DnaA-oriC complex binds and stabilizes one strand of the AT-rich DNA unwinding element (DUE), permitting loading of DNA polymerase. After initiation quickly degrades to an ADP-DnaA complex that is not apt for DNA replication. Binds acidic phospholipids. The polypeptide is Chromosomal replication initiator protein DnaA (Microcystis aeruginosa (strain NIES-843 / IAM M-2473)).